The following is a 167-amino-acid chain: HTH-type transcriptional repressor YetL (167 aa).

In terms of domain architecture, HTH marR-type spans 26 to 160 (SLELFLSLFD…FVKMLGDLFE (135 aa)). The H-T-H motif DNA-binding region spans 74 to 97 (PTELAKRSNVTKATITGLLDGLAR).

Homodimer. The N- and C-terminal helices from both subunits stabilize YetL dimer via extensive intersubunit interactions.

With respect to regulation, binding to the yetM cis sequence is clearly inhibited by kaempferol, morin, apigenin and luteolin, slightly inhibited by quercetin and galangin, but no inhibition is observed with the other flavonoids. Flavonoid binding may induce conformational changes and modulate interaction with DNA. In terms of biological role, negatively regulates yetM expression and its own expression. Binds specifically to corresponding single sites in the divergent yetL and yetM promoter regions, with higher affinity to the yetM region. Recognizes a 28-mer operator of double-stranded DNA that contains a palindromic sequence. This Bacillus subtilis (strain 168) protein is HTH-type transcriptional repressor YetL (yetL).